Consider the following 153-residue polypeptide: Lipoprotein signal peptidase (153 aa).

3 consecutive transmembrane segments (helical) span residues 11-31, 39-59, and 68-88; these read ILIL…SLFV, DCID…FAFL, and LVLV…CYAI. Residues Asp112 and Asp129 contribute to the active site. A helical membrane pass occupies residues 122–142; sequence FAVFNFADVMIDVAVVWILLL.

It belongs to the peptidase A8 family.

Its subcellular location is the cell inner membrane. The enzyme catalyses Release of signal peptides from bacterial membrane prolipoproteins. Hydrolyzes -Xaa-Yaa-Zaa-|-(S,diacylglyceryl)Cys-, in which Xaa is hydrophobic (preferably Leu), and Yaa (Ala or Ser) and Zaa (Gly or Ala) have small, neutral side chains.. Its pathway is protein modification; lipoprotein biosynthesis (signal peptide cleavage). Its function is as follows. This protein specifically catalyzes the removal of signal peptides from prolipoproteins. The protein is Lipoprotein signal peptidase of Sulfurimonas denitrificans (strain ATCC 33889 / DSM 1251) (Thiomicrospira denitrificans (strain ATCC 33889 / DSM 1251)).